A 372-amino-acid polypeptide reads, in one-letter code: GTPase Obg (372 aa).

The Obg domain maps to 1–159; it reads MKFIDEARIE…RMLKLELKVL (159 aa). Residues 128–147 are disordered; sequence LHFKSSTNRAPRQKTDGKPG. The 175-residue stretch at 160–334 folds into the OBG-type G domain; sequence ADVGLLGMPN…LVYAIYDYLA (175 aa). GTP is bound by residues 166-173, 191-195, 213-216, 284-287, and 315-317; these read GMPNAGKS, FTTLA, DIPG, NKLD, and SAL. Residues Ser173 and Thr193 each coordinate Mg(2+).

Belongs to the TRAFAC class OBG-HflX-like GTPase superfamily. OBG GTPase family. As to quaternary structure, monomer. The cofactor is Mg(2+).

The protein resides in the cytoplasm. An essential GTPase which binds GTP, GDP and possibly (p)ppGpp with moderate affinity, with high nucleotide exchange rates and a fairly low GTP hydrolysis rate. Plays a role in control of the cell cycle, stress response, ribosome biogenesis and in those bacteria that undergo differentiation, in morphogenesis control. The sequence is that of GTPase Obg from Burkholderia thailandensis (strain ATCC 700388 / DSM 13276 / CCUG 48851 / CIP 106301 / E264).